A 251-amino-acid polypeptide reads, in one-letter code: Triosephosphate isomerase (251 aa).

9–11 (NWK) contributes to the substrate binding site. Histidine 95 acts as the Electrophile in catalysis. Glutamate 167 acts as the Proton acceptor in catalysis. Residues glycine 173, serine 212, and 233-234 (GG) each bind substrate.

The protein belongs to the triosephosphate isomerase family. As to quaternary structure, homodimer.

Its subcellular location is the cytoplasm. It catalyses the reaction D-glyceraldehyde 3-phosphate = dihydroxyacetone phosphate. It functions in the pathway carbohydrate biosynthesis; gluconeogenesis. Its pathway is carbohydrate degradation; glycolysis; D-glyceraldehyde 3-phosphate from glycerone phosphate: step 1/1. In terms of biological role, involved in the gluconeogenesis. Catalyzes stereospecifically the conversion of dihydroxyacetone phosphate (DHAP) to D-glyceraldehyde-3-phosphate (G3P). This Pseudomonas fluorescens (strain Pf0-1) protein is Triosephosphate isomerase.